The chain runs to 145 residues: 3-hydroxyacyl-[acyl-carrier-protein] dehydratase FabZ (145 aa).

Residue H49 is part of the active site.

This sequence belongs to the thioester dehydratase family. FabZ subfamily.

It localises to the cytoplasm. It catalyses the reaction a (3R)-hydroxyacyl-[ACP] = a (2E)-enoyl-[ACP] + H2O. Its function is as follows. Involved in unsaturated fatty acids biosynthesis. Catalyzes the dehydration of short chain beta-hydroxyacyl-ACPs and long chain saturated and unsaturated beta-hydroxyacyl-ACPs. The sequence is that of 3-hydroxyacyl-[acyl-carrier-protein] dehydratase FabZ from Rickettsia peacockii (strain Rustic).